A 578-amino-acid polypeptide reads, in one-letter code: CTP synthase 2 (578 aa).

One can recognise a Glutamine amidotransferase type-1 domain in the interval 300–553 (SIALVGKYTK…MLAASGKLNT (254 aa)). Active-site for GATase activity residues include C399, H526, and E528.

It belongs to the CTP synthase family.

The catalysed reaction is UTP + L-glutamine + ATP + H2O = CTP + L-glutamate + ADP + phosphate + 2 H(+). Its pathway is pyrimidine metabolism; CTP biosynthesis via de novo pathway; CTP from UDP: step 2/2. Catalyzes the ATP-dependent amination of UTP to CTP with either L-glutamine or ammonia as the source of nitrogen. Constitutes the rate-limiting enzyme in the synthesis of cytosine nucleotides. This chain is CTP synthase 2 (ctps2), found in Xenopus laevis (African clawed frog).